We begin with the raw amino-acid sequence, 565 residues long: Glucose-6-phosphate isomerase (565 aa).

E373 acts as the Proton donor in catalysis. Active-site residues include H404 and K530.

This sequence belongs to the GPI family.

The protein localises to the cytoplasm. It carries out the reaction alpha-D-glucose 6-phosphate = beta-D-fructose 6-phosphate. It participates in carbohydrate biosynthesis; gluconeogenesis. The protein operates within carbohydrate degradation; glycolysis; D-glyceraldehyde 3-phosphate and glycerone phosphate from D-glucose: step 2/4. Catalyzes the reversible isomerization of glucose-6-phosphate to fructose-6-phosphate. This chain is Glucose-6-phosphate isomerase, found in Corynebacterium jeikeium (strain K411).